The chain runs to 473 residues: Presenilin-B (473 aa).

A disordered region spans residues 1 to 141 (MSSDNNNDPF…PLLNKKEKDD (141 aa)). At 1–164 (MSSDNNNDPF…DDEVSLQDFS (164 aa)) the chain is on the cytoplasmic side. Residues 22–46 (RVSTTTSPNRQSINSSPKQSSPKST) show a composition bias toward polar residues. Residues 54-72 (NIILDLNDNNNDNNNTNNY) show a composition bias toward low complexity. Over residues 79–89 (VDNKNKFENKD) the composition is skewed to basic and acidic residues. Residues 165-185 (SMIVSIIIPVSITMMAVVFFV) traverse the membrane as a helical segment. At 186-224 (KYLNNQTLYASTLSYTIAGGSSGGGSGADSITGNSFVDS) the chain is on the lumenal side. N-linked (GlcNAc...) asparagine glycosylation is present at Asn190. Residues 225–245 (LIVAGIVLGMIIVTTVAFVLL) form a helical membrane-spanning segment. Over 246–252 (YKYRCLK) the chain is Cytoplasmic. A helical membrane pass occupies residues 253–273 (ILYGWLFLSVGMMLGSFGTTF). Topologically, residues 274-286 (FQAMLSAANLPLD) are lumenal. Residues 287–307 (YITFAFLIFNFTVCGIIGVFW) traverse the membrane as a helical segment. Tyr308 is a topological domain (cytoplasmic). The chain crosses the membrane as a helical span at residues 309–329 (AHQYVNQLYLVIISVLMAISL). Topologically, residues 330 to 334 (TRLPQ) are lumenal. A helical transmembrane segment spans residues 335-355 (WTIFTLLVIVAIYDLFAVLCP). Residue Asp348 is part of the active site. Residues 356 to 389 (RGPLKVLVELSQERNENIPALVYETGKGSDSNLK) are Cytoplasmic-facing. The chain crosses the membrane as a helical span at residues 390-410 (LGLGDFIFYSLLISRAALVHM). The active site involves Asp394. Residues 411–413 (SCV) lie on the Lumenal side of the membrane. The chain crosses the membrane as a helical span at residues 414–434 (FSTFIAILTGLFLTLLCLAIF). Residues 435-442 (KKALPALP) lie on the Cytoplasmic side of the membrane. A PAL motif is present at residues 439–441 (PAL). The segment at residues 443–463 (ISIFLGILFYYLSNNFLTPFI) is an intramembrane region (helical). Residues 464-473 (EALTLSQIFV) lie on the Cytoplasmic side of the membrane.

The protein belongs to the peptidase A22A family. In terms of assembly, homodimer. Component of the gamma-secretase complex, a complex composed of a presenilin homodimer, nicastrin, aph1 and pen2.

Its subcellular location is the endoplasmic reticulum membrane. It is found in the golgi apparatus membrane. Probable catalytic subunit of the gamma-secretase complex, an endoprotease complex that catalyzes the intramembrane cleavage of integral membrane proteins such as Notch receptors. Requires the other members of the gamma-secretase complex to have a protease activity. This chain is Presenilin-B (psenB), found in Dictyostelium discoideum (Social amoeba).